The chain runs to 85 residues: U4-theraphotoxin-Hhn1t (85 aa).

The first 22 residues, Met-1–Ala-22, serve as a signal peptide directing secretion. A propeptide spanning residues Glu-23–Arg-48 is cleaved from the precursor. 3 cysteine pairs are disulfide-bonded: Cys-52/Cys-66, Cys-56/Cys-77, and Cys-71/Cys-82.

The protein belongs to the neurotoxin 12 (Hwtx-2) family. 02 (Hwtx-2) subfamily. In terms of tissue distribution, expressed by the venom gland.

It is found in the secreted. Functionally, postsynaptic neurotoxin. In Cyriopagopus hainanus (Chinese bird spider), this protein is U4-theraphotoxin-Hhn1t.